The sequence spans 194 residues: Xanthine phosphoribosyltransferase (194 aa).

The xanthine site is built by L20 and N27. 128–132 (ANGQA) serves as a coordination point for 5-phospho-alpha-D-ribose 1-diphosphate. K156 provides a ligand contact to xanthine.

Belongs to the purine/pyrimidine phosphoribosyltransferase family. Xpt subfamily. As to quaternary structure, homodimer.

The protein resides in the cytoplasm. It catalyses the reaction XMP + diphosphate = xanthine + 5-phospho-alpha-D-ribose 1-diphosphate. Its pathway is purine metabolism; XMP biosynthesis via salvage pathway; XMP from xanthine: step 1/1. In terms of biological role, converts the preformed base xanthine, a product of nucleic acid breakdown, to xanthosine 5'-monophosphate (XMP), so it can be reused for RNA or DNA synthesis. The polypeptide is Xanthine phosphoribosyltransferase (Bacillus licheniformis (strain ATCC 14580 / DSM 13 / JCM 2505 / CCUG 7422 / NBRC 12200 / NCIMB 9375 / NCTC 10341 / NRRL NRS-1264 / Gibson 46)).